A 195-amino-acid polypeptide reads, in one-letter code: Probable GTP-binding protein EngB (195 aa).

The EngB-type G domain occupies 22–195 (GLPEIALAGR…WNAILAKINK (174 aa)). Residues 30-37 (GRSNVGKS), 57-61 (GKTQT), 75-78 (DVPG), 142-145 (TKAD), and 174-176 (FSS) each bind GTP. Residues serine 37 and threonine 59 each contribute to the Mg(2+) site.

It belongs to the TRAFAC class TrmE-Era-EngA-EngB-Septin-like GTPase superfamily. EngB GTPase family. Requires Mg(2+) as cofactor.

In terms of biological role, necessary for normal cell division and for the maintenance of normal septation. This is Probable GTP-binding protein EngB from Bacillus pumilus (strain SAFR-032).